We begin with the raw amino-acid sequence, 287 residues long: Large ribosomal subunit protein uL2 (287 aa).

The disordered stretch occupies residues 221 to 287 (RGSVMNPCDH…SKRSRGGRDS (67 aa)). Basic residues predominate over residues 258–287 (KTRKRNKPSNRFVLRKRRRVSKRSRGGRDS).

The protein belongs to the universal ribosomal protein uL2 family. Part of the 50S ribosomal subunit. Forms a bridge to the 30S subunit in the 70S ribosome.

One of the primary rRNA binding proteins. Required for association of the 30S and 50S subunits to form the 70S ribosome, for tRNA binding and peptide bond formation. It has been suggested to have peptidyltransferase activity; this is somewhat controversial. Makes several contacts with the 16S rRNA in the 70S ribosome. This Prochlorococcus marinus (strain SARG / CCMP1375 / SS120) protein is Large ribosomal subunit protein uL2.